Consider the following 378-residue polypeptide: UPF0754 membrane protein BCQ_0944 (378 aa).

The next 2 helical transmembrane spans lie at 1 to 21 (MNIW…GGFT) and 357 to 377 (YLGA…LLFL).

The protein belongs to the UPF0754 family.

Its subcellular location is the cell membrane. The polypeptide is UPF0754 membrane protein BCQ_0944 (Bacillus cereus (strain Q1)).